We begin with the raw amino-acid sequence, 424 residues long: MRTLLPSHTPATVTTAARRRHVIHCAGKRSDSFSINSSSSDWQSSCAILSSKVNSQEQSESLSSNSNGSSSYHVSAVNGHNNGAGVSDLNLVPFNNNQSIQSKKPLSISDLSPAPMHGSNLRVAYQGVPGAYSEAAAGKAYPNCQAIPCDQFEVAFQAVELWIADRAVLPVENSLGGSIHRNYDLLLRHRLHIVGEVQLPVHHCLIALPGVRKEFLTRVISHPQGLAQCEHTLTKLGLNVAREAVDDTAGAAEFIAANNIRDTAAIASARAAEIYGLEILEDGIQDDASNVTRFVMLAREPIIPRTDRPFKTSIVFAHEKGTCVLFKVLSAFAFRNISLTKIESRPNHNVPIRLVDEANVGTAKHFEYMFYIDFEASMAESRAQNALSEVQEFTSFLRVLGSYPMDMTSWSPSSSSSSSSTFSL.

Residues 1–24 (MRTLLPSHTPATVTTAARRRHVIH) constitute a chloroplast transit peptide. Residues 57–71 (EQSESLSSNSNGSSS) show a composition bias toward low complexity. The tract at residues 57-77 (EQSESLSSNSNGSSSYHVSAV) is disordered. The Prephenate dehydratase domain maps to 122–299 (RVAYQGVPGA…NVTRFVMLAR (178 aa)). Residues 313–404 (SIVFAHEKGT…SFLRVLGSYP (92 aa)) form the ACT domain.

In terms of assembly, may interact with GPA1. In terms of tissue distribution, expressed in roots, leaves, stems, flowers and siliques.

It is found in the plastid. It localises to the chloroplast stroma. The catalysed reaction is L-arogenate + H(+) = L-phenylalanine + CO2 + H2O. Its pathway is amino-acid biosynthesis; L-phenylalanine biosynthesis; L-phenylalanine from L-arogenate: step 1/1. Converts the prephenate produced from the shikimate-chorismate pathway into phenylalanine. Together with GCR1 and GPA1, required for blue light-mediated synthesis of phenylpyruvate and subsequently of phenylalanine (Phe), in etiolated seedlings. The polypeptide is Arogenate dehydratase 3, chloroplastic (Arabidopsis thaliana (Mouse-ear cress)).